A 1382-amino-acid polypeptide reads, in one-letter code: Hepatocyte growth factor receptor (1382 aa).

A signal peptide spans 1–24 (MKSPAVLAPGILVFLFTFVQKSDG). Residues 25 to 933 (ECKEALVKSR…VIVQPDQNFT (909 aa)) are Extracellular-facing. Residues 27–516 (KEALVKSRMN…TGKKITKIPL (490 aa)) form the Sema domain. Residue asparagine 45 is glycosylated (N-linked (GlcNAc...) asparagine). 4 disulfides stabilise this stretch: cysteine 95-cysteine 101, cysteine 98-cysteine 160, cysteine 133-cysteine 141, and cysteine 173-cysteine 176. N-linked (GlcNAc...) asparagine glycosylation occurs at asparagine 106. An N-linked (GlcNAc...) asparagine glycan is attached at asparagine 149. N-linked (GlcNAc...) asparagine glycosylation is found at asparagine 203 and asparagine 359. Intrachain disulfides connect cysteine 299–cysteine 364 and cysteine 386–cysteine 398. Residues asparagine 400 and asparagine 406 are each glycosylated (N-linked (GlcNAc...) asparagine). 4 cysteine pairs are disulfide-bonded: cysteine 521–cysteine 539, cysteine 527–cysteine 562, cysteine 530–cysteine 546, and cysteine 542–cysteine 552. IPT/TIG domains lie at 564-656 (PAIY…FSYV), 658-740 (PIIT…FIYR), and 743-837 (PIVY…LIYV). O-linked (Man) threonine glycosylation occurs at threonine 583. Residues asparagine 608 and asparagine 636 are each glycosylated (N-linked (GlcNAc...) asparagine). Threonine 677 and threonine 762 each carry an O-linked (Man) threonine glycan. N-linked (GlcNAc...) asparagine glycans are attached at residues asparagine 786, asparagine 880, and asparagine 931. The chain crosses the membrane as a helical span at residues 934-956 (GLIVGVVSISIILLLLLGLFLWL). The Cytoplasmic portion of the chain corresponds to 957–1382 (KKRKQIKDLG…QDNVNGEGDT (426 aa)). Serine 967 is modified (phosphoserine). At threonine 978 the chain carries Phosphothreonine. A phosphoserine mark is found at serine 991, serine 998, and serine 1001. Position 1004 is a phosphotyrosine (tyrosine 1004). Positions 1079 to 1346 (VHFNEVIGRG…RISAIFSTFI (268 aa)) constitute a Protein kinase domain. ATP contacts are provided by residues 1085–1093 (IGRGHFGCV) and lysine 1111. Aspartate 1205 acts as the Proton acceptor in catalysis. Residues 1213 to 1382 (LDEKFTVKVA…QDNVNGEGDT (170 aa)) form an interaction with RANBP9 region. The residue at position 1231 (tyrosine 1231) is a Phosphotyrosine. Tyrosine 1235 and tyrosine 1236 each carry phosphotyrosine; by autocatalysis. A Phosphothreonine modification is found at threonine 1290. Residues 1321 to 1360 (WHPKAELRPSFSELVSRISAIFSTFIGEHYVHVNATYVNV) form an interaction with MUC20 region. A phosphotyrosine; by autocatalysis mark is found at tyrosine 1350 and tyrosine 1357. Tyrosine 1366 carries the phosphotyrosine modification.

Belongs to the protein kinase superfamily. Tyr protein kinase family. In terms of assembly, heterodimer made of an alpha chain (50 kDa) and a beta chain (145 kDa) which are disulfide linked. Binds PLXNB1. Interacts when phosphorylated with downstream effectors including STAT3, PIK3R1, SRC, PCLG1, GRB2 and GAB1. Interacts with SPSB1, SPSB2 and SPSB4. Interacts with INPP5D/SHIP1. When phosphorylated at Tyr-1357, interacts with INPPL1/SHIP2. Interacts with RANBP9 and RANBP10, as well as SPSB1, SPSB2, SPSB3 and SPSB4. SPSB1 binding occurs in the presence and in the absence of HGF, however HGF treatment has a positive effect on this interaction. Interacts with MUC20; prevents interaction with GRB2 and suppresses hepatocyte growth factor-induced cell proliferation. Interacts with GRB10. Interacts with PTPN1 and PTPN2. Interacts with HSP90AA1 and HSP90AB1; the interaction suppresses MET kinase activity. Interacts with tensin TNS3. Interacts (when phosphorylated) with tensin TNS4 (via SH2 domain); the interaction increases MET protein stability by inhibiting MET endocytosis and subsequent lysosomal degradation. Post-translationally, autophosphorylated in response to ligand binding on Tyr-1235 and Tyr-1236 in the kinase domain leading to further phosphorylation of Tyr-1350 and Tyr-1357 in the C-terminal multifunctional docking site. Dephosphorylated by PTPRJ at Tyr-1350 and Tyr-1366. Dephosphorylated by PTPN1 and PTPN2. In terms of processing, ubiquitinated. Ubiquitination by CBL regulates the receptor stability and activity through proteasomal degradation. O-mannosylation of IPT/TIG domains by TMEM260 is required for protein maturation. O-mannosylated residues are composed of single mannose glycans that are not elongated or modified.

It localises to the membrane. It carries out the reaction L-tyrosyl-[protein] + ATP = O-phospho-L-tyrosyl-[protein] + ADP + H(+). With respect to regulation, in its inactive state, the C-terminal tail interacts with the catalytic domain and inhibits the kinase activity. Upon ligand binding, the C-terminal tail is displaced and becomes phosphorylated, thus increasing the kinase activity. In terms of biological role, receptor tyrosine kinase that transduces signals from the extracellular matrix into the cytoplasm by binding to hepatocyte growth factor/HGF ligand. Regulates many physiological processes including proliferation, scattering, morphogenesis and survival. Ligand binding at the cell surface induces autophosphorylation of MET on its intracellular domain that provides docking sites for downstream signaling molecules. Following activation by ligand, interacts with the PI3-kinase subunit PIK3R1, PLCG1, SRC, GRB2, STAT3 or the adapter GAB1. Recruitment of these downstream effectors by MET leads to the activation of several signaling cascades including the RAS-ERK, PI3 kinase-AKT, or PLCgamma-PKC. The RAS-ERK activation is associated with the morphogenetic effects while PI3K/AKT coordinates prosurvival effects. During embryonic development, MET signaling plays a role in gastrulation, development and migration of muscles and neuronal precursors, angiogenesis and kidney formation. In adults, participates in wound healing as well as organ regeneration and tissue remodeling. Also promotes differentiation and proliferation of hematopoietic cells. In Muntiacus muntjak (Barking deer), this protein is Hepatocyte growth factor receptor (MET).